Here is a 172-residue protein sequence, read N- to C-terminus: Translation initiation factor IF-3 (172 aa).

This sequence belongs to the IF-3 family. As to quaternary structure, monomer.

It localises to the cytoplasm. Functionally, IF-3 binds to the 30S ribosomal subunit and shifts the equilibrium between 70S ribosomes and their 50S and 30S subunits in favor of the free subunits, thus enhancing the availability of 30S subunits on which protein synthesis initiation begins. The protein is Translation initiation factor IF-3 of Bartonella quintana (strain Toulouse) (Rochalimaea quintana).